Here is a 484-residue protein sequence, read N- to C-terminus: Probable receptor-like protein kinase At5g18500 (484 aa).

Residues 21 to 41 (IIVIVLSAIFVVVLAISLWLT) traverse the membrane as a helical segment. A disordered region spans residues 72–135 (RVDEVSSSNG…SVSSANPLTA (64 aa)). The segment covering 91–105 (KFGDKEPEKGIKAES) has biased composition (basic and acidic residues). The segment covering 125–134 (SSVSSANPLT) has biased composition (polar residues). Thr-155 is modified (phosphothreonine). The 280-residue stretch at 166 to 445 (FSRDNIIGDG…MLESEEYPIA (280 aa)) folds into the Protein kinase domain. ATP-binding positions include 172–180 (IGDGGYGVV) and Lys-194. The residue at position 239 (Tyr-239) is a Phosphotyrosine. Asp-292 functions as the Proton acceptor in the catalytic mechanism. Position 296 is a phosphoserine (Ser-296). 2 positions are modified to phosphothreonine: Thr-326 and Thr-331. Tyr-339 is modified (phosphotyrosine). A disordered region spans residues 425–484 (EKRPRMSQVARMLESEEYPIAREDRRRRRSQNGTTRDSDPPRNSTDTDKSEYHDLKPEGG). Residues 460 to 484 (RDSDPPRNSTDTDKSEYHDLKPEGG) show a composition bias toward basic and acidic residues.

The protein belongs to the protein kinase superfamily. Ser/Thr protein kinase family.

The protein localises to the cell membrane. It carries out the reaction L-seryl-[protein] + ATP = O-phospho-L-seryl-[protein] + ADP + H(+). The enzyme catalyses L-threonyl-[protein] + ATP = O-phospho-L-threonyl-[protein] + ADP + H(+). This Arabidopsis thaliana (Mouse-ear cress) protein is Probable receptor-like protein kinase At5g18500.